The primary structure comprises 583 residues: Hyaluronan synthase-related protein (583 aa).

Residues 1 to 29 (MENTTDPENIPVSKPKYPTIRRILSQTFR) are Cytoplasmic-facing. Residues 30–50 (ILLLFSITTAYVLGYQALCHQ) form a helical membrane-spanning segment. The Extracellular segment spans residues 51-52 (GL). The helical transmembrane segment at 53–73 (LITFGLYGAAMLLHLLMQGIF) threads the bilayer. Residues 74–393 (ANLEIRRIEK…CNAQWWHQHH (320 aa)) are Cytoplasmic-facing. The helical transmembrane segment at 394-414 (IWMTYESATGIFFPFFVTAVL) threads the bilayer. At 415-425 (IRLMYSSSLCN) the chain is on the extracellular side. The chain crosses the membrane as a helical span at residues 426-446 (IVWLFLCIQIMSLLLSLYASW). The Cytoplasmic portion of the chain corresponds to 447–457 (QSKKLSMVLMS). Residues 458–478 (LYSTLYIIWLLPCQLVALLTI) form a helical membrane-spanning segment. The Extracellular portion of the chain corresponds to 479 to 497 (AKSDWGTSGRKKVVNNYVP). Residues 498–518 (LFSLSIWAAVLLGGLCYSMYI) form a helical membrane-spanning segment. Topologically, residues 519–535 (GCRKDWSKPQANRELYH) are cytoplasmic. Residues 536 to 556 (LLYGCAGYMAYWVLMTVIYCV) traverse the membrane as a helical segment. Topologically, residues 557 to 583 (SGSCCKMRSQAVPQTHDITSLSVSLLV) are extracellular.

This sequence belongs to the NodC/HAS family.

Its subcellular location is the membrane. In Xenopus laevis (African clawed frog), this protein is Hyaluronan synthase-related protein (has-rs).